Reading from the N-terminus, the 403-residue chain is Flavohemoprotein (403 aa).

The Globin domain occupies 1–138 (MLTQKTKDIV…LADILAGMES (138 aa)). Residue histidine 85 participates in heme b binding. Catalysis depends on charge relay system residues tyrosine 95 and glutamate 137. Positions 149-403 (GGWAGWRRFI…EVFGPDLFAE (255 aa)) are reductase. The FAD-binding FR-type domain occupies 152 to 262 (AGWRRFIVRE…AAPYGNFYID (111 aa)). FAD-binding positions include tyrosine 190 and 206 to 209 (RQYS). Position 275–280 (275–280 (GVGLTP)) interacts with NADP(+). 395-398 (VFGP) contacts FAD.

It belongs to the globin family. Two-domain flavohemoproteins subfamily. In the C-terminal section; belongs to the flavoprotein pyridine nucleotide cytochrome reductase family. Heme b is required as a cofactor. FAD serves as cofactor.

It catalyses the reaction 2 nitric oxide + NADPH + 2 O2 = 2 nitrate + NADP(+) + H(+). The catalysed reaction is 2 nitric oxide + NADH + 2 O2 = 2 nitrate + NAD(+) + H(+). Is involved in NO detoxification in an aerobic process, termed nitric oxide dioxygenase (NOD) reaction that utilizes O(2) and NAD(P)H to convert NO to nitrate, which protects the bacterium from various noxious nitrogen compounds. Therefore, plays a central role in the inducible response to nitrosative stress. The chain is Flavohemoprotein from Rhizobium meliloti (strain 1021) (Ensifer meliloti).